The chain runs to 31 residues: Nemertide alpha-4 (31 aa).

Disulfide bonds link Cys-2/Cys-16, Cys-9/Cys-20, and Cys-15/Cys-26. 4-hydroxyproline occurs at positions 28 and 29.

The protein belongs to the nemertide family. In terms of tissue distribution, confined to the epidermis and to the mucus layer.

Its subcellular location is the secreted. Its function is as follows. Potent toxin, demonstrating strong inhibitory effects on insect sodium channels (Nav) and reduced activity on mammalian sodium channels. Potently inhibits inactivation of insect sodium channels of B.germanica (BgNav1) (EC(50)=11.1 nM). Also delays the inactivation of most mammalian Nav (human Nav1.1/SCN1A; EC(50)=92 nM, rat Nav1.2/SCN2A; EC(50)=134.2 nM, rat Nav1.3/SCN3A; EC(50)=12.9 nM, rat Nav1.4/SCN4A; EC(50)=14.6 nM, human Nav1.5/SCN5A; EC(50)=27.8 nM, mouse Nav1.6/SCN8A; EC(50)=123.6 nM, human Nav1.9/SCN9A; EC(50)=80.5 nM). Inactivation is completely prevented by a concentration of 1 uM, resulting in sustained, non-inactivating currents. In addition, the toxin significantly enhances the recovery from inactivation, and the open state is not required for the toxin to interact with the channel. In vivo, injection into brine shrimp (Artemia salina) stops movement or causes death after 24 hours (EC(50)=0.4 uM). The protein is Nemertide alpha-4 of Lineus sanguineus (Ribbon worm).